The primary structure comprises 468 residues: ATP synthase subunit beta (468 aa).

155–162 (GGAGVGKT) lines the ATP pocket.

The protein belongs to the ATPase alpha/beta chains family. As to quaternary structure, F-type ATPases have 2 components, CF(1) - the catalytic core - and CF(0) - the membrane proton channel. CF(1) has five subunits: alpha(3), beta(3), gamma(1), delta(1), epsilon(1). CF(0) has three main subunits: a(1), b(2) and c(9-12). The alpha and beta chains form an alternating ring which encloses part of the gamma chain. CF(1) is attached to CF(0) by a central stalk formed by the gamma and epsilon chains, while a peripheral stalk is formed by the delta and b chains.

It is found in the cell membrane. The catalysed reaction is ATP + H2O + 4 H(+)(in) = ADP + phosphate + 5 H(+)(out). Produces ATP from ADP in the presence of a proton gradient across the membrane. The catalytic sites are hosted primarily by the beta subunits. This chain is ATP synthase subunit beta, found in Bacillus cereus (strain B4264).